A 253-amino-acid polypeptide reads, in one-letter code: Testis-expressed protein 47 (253 aa).

Testis-specific.

The polypeptide is Testis-expressed protein 47 (Homo sapiens (Human)).